A 346-amino-acid polypeptide reads, in one-letter code: Uroporphyrinogen decarboxylase (346 aa).

Substrate-binding positions include 21-25 (RQAGR), D71, Y146, S201, and H316.

Belongs to the uroporphyrinogen decarboxylase family. Homodimer.

It is found in the cytoplasm. It carries out the reaction uroporphyrinogen III + 4 H(+) = coproporphyrinogen III + 4 CO2. It participates in porphyrin-containing compound metabolism; protoporphyrin-IX biosynthesis; coproporphyrinogen-III from 5-aminolevulinate: step 4/4. Catalyzes the decarboxylation of four acetate groups of uroporphyrinogen-III to yield coproporphyrinogen-III. The chain is Uroporphyrinogen decarboxylase from Rickettsia massiliae (strain Mtu5).